The chain runs to 638 residues: Factor of DNA methylation 3 (638 aa).

A coiled-coil region spans residues 318 to 497 (FNRIFADHEK…RALISNLRDM (180 aa)).

In terms of biological role, acts in association with FDM4 and FDM5 for RNA-directed DNA methylation (RdDM). In Arabidopsis thaliana (Mouse-ear cress), this protein is Factor of DNA methylation 3.